The chain runs to 332 residues: MQLETQDALYVALELVIAALAVAGNVLVCAAVGASSALQTPTNYFLVSLATADVAVGLFAIPFAITISLGFCTDFHGCLFLACFVLVLTQSSIFSLLAVAVDRYLAIRVPLRYKGLVTGTRARGIIAVLWVLAFGIGLTPFLGWNSKDSATSNCTELGDGIANKSCCPVTCLFENVVPMSYMVYFNFFGCVLPPLLIMLVIYIKIFMVACKQLQRMELMDHSRTTLQREIHAAKSLAMIVGIFALCWLPVHAINCITLFHPALAKDKPKWVMNVAILLSHANSVVNPIVYAYRNRDFRYSFHKIISRYVLCQAETKGGSGQAGAQSTLSLGL.

Over 1–8 (MQLETQDA) the chain is Extracellular. A helical membrane pass occupies residues 9–33 (LYVALELVIAALAVAGNVLVCAAVG). At 34-43 (ASSALQTPTN) the chain is on the cytoplasmic side. The chain crosses the membrane as a helical span at residues 44 to 67 (YFLVSLATADVAVGLFAIPFAITI). Topologically, residues 68–78 (SLGFCTDFHGC) are extracellular. Cysteine 78 and cysteine 171 are oxidised to a cystine. Residues 79-101 (LFLACFVLVLTQSSIFSLLAVAV) traverse the membrane as a helical segment. Residues 102 to 121 (DRYLAIRVPLRYKGLVTGTR) lie on the Cytoplasmic side of the membrane. A helical membrane pass occupies residues 122–144 (ARGIIAVLWVLAFGIGLTPFLGW). Over 145-178 (NSKDSATSNCTELGDGIANKSCCPVTCLFENVVP) the chain is Extracellular. Asparagine 153 and asparagine 163 each carry an N-linked (GlcNAc...) asparagine glycan. Glutamate 174 is an adenosine binding site. Residues 179-203 (MSYMVYFNFFGCVLPPLLIMLVIYI) traverse the membrane as a helical segment. Topologically, residues 204 to 235 (KIFMVACKQLQRMELMDHSRTTLQREIHAAKS) are cytoplasmic. A helical membrane pass occupies residues 236-259 (LAMIVGIFALCWLPVHAINCITLF). Asparagine 254 lines the adenosine pocket. The Extracellular segment spans residues 260–267 (HPALAKDK). A helical transmembrane segment spans residues 268-291 (PKWVMNVAILLSHANSVVNPIVYA). Adenosine contacts are provided by serine 279 and histidine 280. The Cytoplasmic segment spans residues 292–332 (YRNRDFRYSFHKIISRYVLCQAETKGGSGQAGAQSTLSLGL). Cysteine 311 carries the S-palmitoyl cysteine lipid modification.

This sequence belongs to the G-protein coupled receptor 1 family.

Its subcellular location is the cell membrane. Its function is as follows. Receptor for adenosine. The activity of this receptor is mediated by G proteins which activate adenylyl cyclase. In Mus musculus (Mouse), this protein is Adenosine receptor A2b (Adora2b).